Here is a 161-residue protein sequence, read N- to C-terminus: Lipid droplet assembly factor 1 (161 aa).

The Cytoplasmic segment spans residues 1-43 (MAEEEPSSVSRDLQELQRKLGLLLESFQNNSKVVAFMKSPVGR). A helical transmembrane segment spans residues 44–61 (FLDRHPFLVLTVLMFVTM). The Lumenal portion of the chain corresponds to 62 to 67 (SAIPVG). The helical transmembrane segment at 68 to 87 (FFLLIVVLTSLGALMGAILL) threads the bilayer. The Cytoplasmic segment spans residues 88 to 93 (EGLVIS). The chain crosses the membrane as a helical span at residues 94-110 (VCGLSLLCILCGLGFVS). The Lumenal portion of the chain corresponds to 111–116 (LALSGI). A helical membrane pass occupies residues 117-133 (TMMSYVVVSCLMSYWFS). At 134-161 (PSRPPTQQHANIDSQLAMKFTESEKLGL) the chain is on the cytoplasmic side.

The protein belongs to the LDAF1 family. In terms of assembly, interacts with BSCL2/seipin to form an oligomeric complex.

It is found in the endoplasmic reticulum membrane. The protein resides in the lipid droplet. In terms of biological role, plays an important role in the formation of lipid droplets (LD) which are storage organelles at the center of lipid and energy homeostasis. In association with BSCL2/seipin, defines the sites of LD formation in the endoplasmic reticulum. This is Lipid droplet assembly factor 1 from Rattus norvegicus (Rat).